A 1687-amino-acid polypeptide reads, in one-letter code: Genome polyprotein (1687 aa).

The segment covering 1–13 (MRMATPSSAPSVR) has biased composition (polar residues). A disordered region spans residues 1-56 (MRMATPSSAPSVRNTEKRKNKKASSKASVSFGAPSPLSSESEDEINYMTPPEQEAQ). Residues 1 to 116 (MRMATPSSAP…FRRYPHLRPK (116 aa)) are interaction with host MAP1LC3A/LC3. The segment at 117–341 (EDRPDAPSHA…ISIFGEWQAE (225 aa)) is interaction with NTPase. An interaction with NS4 region spans residues 244–341 (SPVQDWNVDP…ISIFGEWQAE (98 aa)). Host ER membrane association stretches follow at residues 261 to 292 (KLRM…KPLN) and 302 to 341 (WTFS…WQAE). Residues 342–518 (GPFDLALDVV…GKTCFCQNLA (177 aa)) form an interaction with NS1-2, NS4 and homooligomerization region. Positions 476–641 (RISMARAAFE…DDARARAPGD (166 aa)) constitute an SF3 helicase domain. 504-511 (GRPGIGKT) contacts ATP. Residues 595-700 (VIIITTNQQT…AVALVHERHD (106 aa)) are important for mitochondrion targeting. Residues 893 to 898 (DEEYDE) are acidic. Position 896 is an O-(5'-phospho-RNA)-tyrosine (Tyr896). The segment at 978 to 994 (WADDDRQVDYGEKINFE) is interaction with host EIF4G. A Peptidase C37 domain is found at 995 to 1172 (APVSIWSRVV…AATHGEPTLE (178 aa)). Residues His1024, Asp1048, and Cys1133 each act as for 3CLpro activity in the active site. Residues 1416–1537 (RYHMDADYTR…STNLELDMVK (122 aa)) form the RdRp catalytic domain. Mg(2+) is bound by residues Asp1420 and Asp1422. Cys1482 and Cys1484 form a disulfide bridge. Residues Asp1524, Glu1525, and Ser1569 each contribute to the Mg(2+) site.

Homodimer. Interacts with NTPase; this interaction increases the proapoptotic activity of the NTPase and is crucial for the formation of the viral replication complex. Interacts with NS4; this interaction is crucial for the formation of the viral replication complex. Interacts (via N-terminus) with host VAPA. Interacts with host VAPB. As to quaternary structure, monomer. In terms of assembly, homooligomer. Interacts with NS1-2; this interaction increases the proapoptotic activity of the NTPase and is crucial for the formation of the viral replication complex. Interacts with NS4; this interaction increases the proapoptotic activity of the NTPase. Interacts with host G3BP1; this interaction leads to the redistribution of G3BP1 and its cellular partners to the viral replication complexes, thereby preventing the assembly of stress granules. Homodimer. Monomer; in solution. As to quaternary structure, interacts with NTPase; this interaction increases the proapoptotic activity of the NTPase. Interacts with NS1-2; this interaction is crucial for the formation of the viral replication complex. In terms of assembly, monomer. Interacts with the RNA-directed RNA polymerase; this interaction induces the multimerization of the RdRp and enhances its activity. Interacts with host IEF4E; this interaction plays a role in translation of viral proteins. Interacts (via C-terminus) with host IEF4G1 (via central domain); this interaction plays a role in translation of viral proteins. Homohexamer; also forms fibrous hexameric oligomer. Interacts with the viral genome-linked protein; this interaction induces the multimerization of the RdRp and enhances its activity. The cofactor is Mg(2+). Mn(2+) serves as cofactor. Specific enzymatic cleavages in vivo yield mature proteins. 3CLpro is first autocatalytically cleaved, then processes the whole polyprotein. In terms of processing, cleaved by host CASP3/caspase 3 at 18-22 h.p.i. The cleavage allows NS1 secretion, which is essential for intestinal infection and resistance to IFN-lambda. Post-translationally, VPg is uridylylated by the polymerase and is covalently attached to the 5'-end of the polyadenylated genomic and subgenomic RNAs. This uridylylated form acts as a nucleotide-peptide primer for the polymerase.

It localises to the host endoplasmic reticulum membrane. The protein resides in the secreted. The protein localises to the host endosome membrane. It is found in the host mitochondrion. Its subcellular location is the host cytoplasm. It localises to the host perinuclear region. It catalyses the reaction a ribonucleoside 5'-triphosphate + H2O = a ribonucleoside 5'-diphosphate + phosphate + H(+). It carries out the reaction Endopeptidase with a preference for cleavage when the P1 position is occupied by Glu-|-Xaa and the P1' position is occupied by Gly-|-Yaa.. The enzyme catalyses RNA(n) + a ribonucleoside 5'-triphosphate = RNA(n+1) + diphosphate. Its activity is regulated as follows. Inhibited by Suramin, Suramin-related compounds and NF023. Inhibited by PPNDS. In terms of biological role, induces the proliferation of the host smooth ER membranes forming long tubular structures. These remodeled membranes probably form the viral factories that contain the replication complex. May play a role in viral replication by interacting with host VAPA, a vesicle-associated membrane protein that plays a role in SNARE-mediated vesicle fusion. This interaction may target replication complex to intracellular membranes. Promotes intestinal tropism and persistent fecal shedding in strain CR6. This function requires Glu-94 and is present in persistant strains. Its function is as follows. Displays NTPase activity, but probably no helicase activity. Displays RNA chaperone-like activity and destabilizes dsRNA. Induces the formation of convoluted membranes derived from the host ER. These remodeled membranes probably form the viral factories that contain the replication complex. Initiates host cell death by targeting the mitochondrial outer membrane, leading to the permeabilization of mitochondria, programmed host cell death and viral egress. Externalization of host cardiolipin seems to be involved in the process. Probably plays a role in preventing the assembly of host stress granules. Functionally, probable key protein responsible for the formation of membrane alterations by the virus. Induces the formation of convoluted membranes derived from the host ER. These remodeled membranes probably form the viral factories that contain the replication complex. May play a role in targeting replication complex to intracellular membranes. In terms of biological role, viral genome-linked protein is covalently linked to the 5'-end of the positive-strand, negative-strand genomic RNAs and subgenomic RNA. Acts as a genome-linked replication primer. May recruit ribosome to viral RNA thereby promoting viral proteins translation. Interacts with host translation initiation complex to allow the translation of viral proteins. Induces the formation of aggregates of RNA-directed RNA polymerase in the presence of RNA. Through its interaction with the viral RNA-directed RNA polymerase, plays a crucial role in enhancing the polymerase activity. Processes the polyprotein. 3CLpro-RdRp is first released by autocleavage, then all other proteins are cleaved. May cleave host polyadenylate-binding protein thereby inhibiting cellular translation. Does not cleave host G3BP1. Its function is as follows. Replicates genomic and antigenomic RNA by recognizing replications specific signals. Also transcribes a subgenomic mRNA by initiating RNA synthesis internally on antigenomic RNA. This sgRNA codes for structural proteins. Catalyzes the covalent attachment VPg with viral RNAs. The chain is Genome polyprotein from Norovirus (isolate Mouse/NoV/United States/MNV1/2002/GV) (MNV-1).